We begin with the raw amino-acid sequence, 388 residues long: Succinate--CoA ligase [ADP-forming] subunit beta (388 aa).

The ATP-grasp domain maps to 9 to 244 (KSLFAEYGLP…PSQDDAREAH (236 aa)). Residues K46, 53–55 (GRG), E99, T102, and E107 contribute to the ATP site. Mg(2+) is bound by residues N199 and D213. Residues N264 and 321–323 (GIV) contribute to the substrate site.

Belongs to the succinate/malate CoA ligase beta subunit family. As to quaternary structure, heterotetramer of two alpha and two beta subunits. Mg(2+) is required as a cofactor.

It carries out the reaction succinate + ATP + CoA = succinyl-CoA + ADP + phosphate. It catalyses the reaction GTP + succinate + CoA = succinyl-CoA + GDP + phosphate. The protein operates within carbohydrate metabolism; tricarboxylic acid cycle; succinate from succinyl-CoA (ligase route): step 1/1. Functionally, succinyl-CoA synthetase functions in the citric acid cycle (TCA), coupling the hydrolysis of succinyl-CoA to the synthesis of either ATP or GTP and thus represents the only step of substrate-level phosphorylation in the TCA. The beta subunit provides nucleotide specificity of the enzyme and binds the substrate succinate, while the binding sites for coenzyme A and phosphate are found in the alpha subunit. In Shewanella frigidimarina (strain NCIMB 400), this protein is Succinate--CoA ligase [ADP-forming] subunit beta.